Reading from the N-terminus, the 301-residue chain is Putative S-adenosyl-L-methionine-dependent methyltransferase MT0851 (301 aa).

S-adenosyl-L-methionine is bound by residues Asp127 and 156–157 (DL).

This sequence belongs to the UPF0677 family.

In terms of biological role, exhibits S-adenosyl-L-methionine-dependent methyltransferase activity. In Mycobacterium tuberculosis (strain CDC 1551 / Oshkosh), this protein is Putative S-adenosyl-L-methionine-dependent methyltransferase MT0851.